We begin with the raw amino-acid sequence, 382 residues long: Anhydro-N-acetylmuramic acid kinase (382 aa).

An ATP-binding site is contributed by 22–29 (GTSMDGVD).

This sequence belongs to the anhydro-N-acetylmuramic acid kinase family.

The enzyme catalyses 1,6-anhydro-N-acetyl-beta-muramate + ATP + H2O = N-acetyl-D-muramate 6-phosphate + ADP + H(+). It functions in the pathway amino-sugar metabolism; 1,6-anhydro-N-acetylmuramate degradation. The protein operates within cell wall biogenesis; peptidoglycan recycling. Catalyzes the specific phosphorylation of 1,6-anhydro-N-acetylmuramic acid (anhMurNAc) with the simultaneous cleavage of the 1,6-anhydro ring, generating MurNAc-6-P. Is required for the utilization of anhMurNAc either imported from the medium or derived from its own cell wall murein, and thus plays a role in cell wall recycling. In Burkholderia orbicola (strain AU 1054), this protein is Anhydro-N-acetylmuramic acid kinase.